The sequence spans 329 residues: Glycosyltransferase family protein 64 C3 (329 aa).

A signal peptide spans 1 to 27 (MGVKSVRFSIWFLFVVTDLVFCRTLSG). Asn99 is a glycosylation site (N-linked (GlcNAc...) asparagine). Residues 118-123 (SSLNAR), 139-141 (DDD), Arg169, 226-230 (RNCED), and 271-284 (VGLS…RKRR) contribute to the substrate site. Asp141 is a binding site for Mn(2+). A disulfide bridge links Cys228 with Cys287. Asp230 is a catalytic residue. A substrate binding region spans residues 268-284 (VRDVGLSSRRVEHRKRR).

Belongs to the glycosyltransferase 64 family. Mn(2+) serves as cofactor.

Its pathway is protein modification; protein glycosylation. In terms of biological role, probable glycosyltransferase. In Arabidopsis thaliana (Mouse-ear cress), this protein is Glycosyltransferase family protein 64 C3.